The primary structure comprises 451 residues: Exodeoxyribonuclease 7 large subunit (451 aa).

This sequence belongs to the XseA family. Heterooligomer composed of large and small subunits.

It is found in the cytoplasm. The catalysed reaction is Exonucleolytic cleavage in either 5'- to 3'- or 3'- to 5'-direction to yield nucleoside 5'-phosphates.. In terms of biological role, bidirectionally degrades single-stranded DNA into large acid-insoluble oligonucleotides, which are then degraded further into small acid-soluble oligonucleotides. The protein is Exodeoxyribonuclease 7 large subunit of Thiobacillus denitrificans (strain ATCC 25259 / T1).